We begin with the raw amino-acid sequence, 826 residues long: Ribonucleases P/MRP protein subunit POP1 (826 aa).

2 disordered regions span residues 1–24 (MATT…PRKI) and 49–91 (NKDF…SGGD). Residues 58-65 (KRRRTNSY) carry the Nuclear localization signal motif. The segment covering 70-79 (AKKRNIKRQK) has biased composition (basic residues).

Component of nuclear RNase P and RNase MRP ribonucleoproteins. RNase P consists of a catalytic RNA moiety and different protein chains. Several subunits of RNase P are also part of the RNase MRP complex. RNase MRP consists of a catalytic RNA moiety and several protein subunits.

It is found in the nucleus. Its subcellular location is the nucleolus. Functionally, component of ribonuclease P, a ribonucleoprotein complex that generates mature tRNA molecules by cleaving their 5'-ends. Also a component of the MRP ribonuclease complex, which cleaves pre-rRNA sequences. Required for rRNA maturation, including 5.8S rRNA processing. The chain is Ribonucleases P/MRP protein subunit POP1 from Arabidopsis thaliana (Mouse-ear cress).